The sequence spans 248 residues: 23S rRNA (guanosine-2'-O-)-methyltransferase RlmB (248 aa).

3 residues coordinate S-adenosyl-L-methionine: Gly198, Leu218, and Leu227.

It belongs to the class IV-like SAM-binding methyltransferase superfamily. RNA methyltransferase TrmH family. RlmB subfamily.

It is found in the cytoplasm. It catalyses the reaction guanosine(2251) in 23S rRNA + S-adenosyl-L-methionine = 2'-O-methylguanosine(2251) in 23S rRNA + S-adenosyl-L-homocysteine + H(+). Its function is as follows. Specifically methylates the ribose of guanosine 2251 in 23S rRNA. This Pseudomonas aeruginosa (strain ATCC 15692 / DSM 22644 / CIP 104116 / JCM 14847 / LMG 12228 / 1C / PRS 101 / PAO1) protein is 23S rRNA (guanosine-2'-O-)-methyltransferase RlmB.